The sequence spans 115 residues: MGRGRGVSSGGGQSSLGYLFGGGETAPAAKAKPAAAAEKETTPAPVKKAAVAAAASPSAAEKMKEIPAGIQSTQANNYFRAQGQNCGNFLTDRPSTKVHAAPGGGSSLGYLFGGK.

Positions 29–48 (AKAKPAAAAEKETTPAPVKK) are disordered.

This sequence belongs to the SPIRAL1 family.

Functionally, acts in maintaining the cortical microtubules organization essential for anisotropic cell growth. This chain is Protein SPIRAL1-like 2, found in Oryza sativa subsp. japonica (Rice).